Consider the following 341-residue polypeptide: Ferrochelatase (341 aa).

Fe cation is bound by residues H189 and E293.

This sequence belongs to the ferrochelatase family.

It localises to the cytoplasm. It catalyses the reaction heme b + 2 H(+) = protoporphyrin IX + Fe(2+). It participates in porphyrin-containing compound metabolism; protoheme biosynthesis; protoheme from protoporphyrin-IX: step 1/1. Its function is as follows. Catalyzes the ferrous insertion into protoporphyrin IX. In Pseudomonas fluorescens (strain SBW25), this protein is Ferrochelatase.